Reading from the N-terminus, the 131-residue chain is Lactose permease (131 aa).

Over 1–13 the chain is Cytoplasmic; the sequence is MKFSELAPRERHN. A helical membrane pass occupies residues 14–34; the sequence is FVYFLLFFFFYHFIMSAYFPF. The Periplasmic portion of the chain corresponds to 35–50; that stretch reads FPVWLADVNHLTKTET. Residues 51–71 traverse the membrane as a helical segment; that stretch reads GIVFSSISLFAIIFQPVFGLM. Residues 72-80 lie on the Cytoplasmic side of the membrane; the sequence is SDKLGLRKH. The helical transmembrane segment at 81–101 threads the bilayer; that stretch reads LLWTITVLLILFAPFFIFVFS. A topological domain (periplasmic) is located at residue proline 102. Residues 103–123 traverse the membrane as a helical segment; the sequence is LLQMNIIAGSLVGGIYLGIVF. The Cytoplasmic segment spans residues 124–131; that stretch reads STAPGVGS.

Belongs to the major facilitator superfamily. Oligosaccharide:H(+) symporter (OHS) (TC 2.A.1.5) family.

It is found in the cell inner membrane. The enzyme catalyses lactose(in) + H(+)(in) = lactose(out) + H(+)(out). Its function is as follows. Responsible for transport of beta-galactosides into the cell, with the concomitant import of a proton (symport system). This chain is Lactose permease (lacY), found in Klebsiella pneumoniae.